A 319-amino-acid chain; its full sequence is Methionyl-tRNA formyltransferase (319 aa).

(6S)-5,6,7,8-tetrahydrofolate is bound at residue 110–113 (SLLP).

Belongs to the Fmt family.

It catalyses the reaction L-methionyl-tRNA(fMet) + (6R)-10-formyltetrahydrofolate = N-formyl-L-methionyl-tRNA(fMet) + (6S)-5,6,7,8-tetrahydrofolate + H(+). Its function is as follows. Attaches a formyl group to the free amino group of methionyl-tRNA(fMet). The formyl group appears to play a dual role in the initiator identity of N-formylmethionyl-tRNA by promoting its recognition by IF2 and preventing the misappropriation of this tRNA by the elongation apparatus. This Geobacillus thermodenitrificans (strain NG80-2) protein is Methionyl-tRNA formyltransferase.